The sequence spans 232 residues: Ribose-5-phosphate isomerase A (232 aa).

Residues 28 to 31 (TGST), 83 to 86 (DGAD), and 96 to 99 (KGGG) contribute to the substrate site. Glutamate 105 functions as the Proton acceptor in the catalytic mechanism. Lysine 123 provides a ligand contact to substrate.

It belongs to the ribose 5-phosphate isomerase family. In terms of assembly, homodimer.

The enzyme catalyses aldehydo-D-ribose 5-phosphate = D-ribulose 5-phosphate. It participates in carbohydrate degradation; pentose phosphate pathway; D-ribose 5-phosphate from D-ribulose 5-phosphate (non-oxidative stage): step 1/1. In terms of biological role, catalyzes the reversible conversion of ribose-5-phosphate to ribulose 5-phosphate. The polypeptide is Ribose-5-phosphate isomerase A (Rhodopseudomonas palustris (strain BisB18)).